A 412-amino-acid polypeptide reads, in one-letter code: Subtilisin-like protease 6 (412 aa).

The signal sequence occupies residues 1–20; the sequence is MGFITKAIPIVLAALSTVNG. The propeptide occupies 21–126; the sequence is ARILEAGPHA…VVRTTTNGTN (106 aa). The Inhibitor I9 domain occupies 36–120; it reads KYIVVMKREV…FIEPDFVVRT (85 aa). Residues Asn-123 and Asn-126 are each glycosylated (N-linked (GlcNAc...) asparagine). The Peptidase S8 domain maps to 135 to 412; that stretch reads SWGLARVGSK…GKLIYNGSGK (278 aa). Residues Asp-167 and His-198 each act as charge relay system in the active site. Residues Asn-252 and Asn-264 are each glycosylated (N-linked (GlcNAc...) asparagine). Ser-358 acts as the Charge relay system in catalysis. An N-linked (GlcNAc...) asparagine glycan is attached at Asn-408.

This sequence belongs to the peptidase S8 family.

The protein resides in the secreted. In terms of biological role, secreted subtilisin-like serine protease with keratinolytic activity that contributes to pathogenicity. This chain is Subtilisin-like protease 6 (SUB6), found in Trichophyton rubrum (Athlete's foot fungus).